The chain runs to 116 residues: Iron-sulfur cluster insertion protein ErpA (116 aa).

Iron-sulfur cluster contacts are provided by cysteine 44, cysteine 108, and cysteine 110.

Belongs to the HesB/IscA family. Homodimer. Requires iron-sulfur cluster as cofactor.

Required for insertion of 4Fe-4S clusters for at least IspG. The chain is Iron-sulfur cluster insertion protein ErpA from Aeromonas hydrophila subsp. hydrophila (strain ATCC 7966 / DSM 30187 / BCRC 13018 / CCUG 14551 / JCM 1027 / KCTC 2358 / NCIMB 9240 / NCTC 8049).